Reading from the N-terminus, the 1942-residue chain is GREB1-like protein (1942 aa).

4 disordered regions span residues 76–101 (SSNSVEDMDDEDDSDTSSPPLPYLQG), 235–306 (PFSN…GTKT), 325–373 (MDGR…HRSW), and 1123–1256 (TKTA…RTQV). Positions 81-90 (EDMDDEDDSD) are enriched in acidic residues. A compositionally biased stretch (low complexity) spans 237 to 253 (SNSASSSKPSSSSSLSS). Positions 338 to 362 (NPLSTPSHGYRTTETGDSPASTAMS) are enriched in polar residues. The segment covering 1127–1155 (TSREERPREGERSSGETAEHDDLPMELER) has biased composition (basic and acidic residues). Residues 1158 to 1171 (SNASAATRTSGSTT) show a composition bias toward low complexity. Residues 1172–1202 (ENGVSSSSILDKPSSQSDPCGSRTMMDSCSS) show a composition bias toward polar residues. Over residues 1212–1248 (SQAPSSSSTSSFSSASSSSSSSSSPAAQRPSQSTQAP) the composition is skewed to low complexity. Residues 1861–1881 (GVIFSGLLLYLCDSFVVSSLL) traverse the membrane as a helical segment.

The protein belongs to the GREB1 family.

The protein localises to the membrane. Its function is as follows. Plays a major role in early metanephros development. This Danio rerio (Zebrafish) protein is GREB1-like protein (greb1l).